The chain runs to 384 residues: MINDLITLTQQLIRQPSITPNDCNCQKIITDYLKSLQFNIEPMNSSNTSNIWAYRYGYDQKKYTTLLFAGHTDVVPPGDIHNWQYPPFSGTVHNNIIYGRGSSDMKGALAAMLVATKSFIQKYPKHKNRIAFIITSDEEGSGIHGTKKIIKSLIHRHEHINYCIIGEPSSNNKIGDVIKNGRRGSCTGKLVIHGSQGHVAYPQFLKNPIHLAIPILSKLLNTMWDQHKSTLFPDTSIQITHLHTIPINYSTNNITPEQLILNFNFRFNDQSTMHSIHNNINKILSNYHVTYHLHWESKSEPYFSAPGKLVNIIIDIIKKYYNITPQLNTTGGTSDGRFIIQTGAEIIELGALNNTIHKVNECIDLVDLKSLSHIYFKIMEKILL.

H71 provides a ligand contact to Zn(2+). The active site involves D73. A Zn(2+)-binding site is contributed by D104. The active-site Proton acceptor is the E138. E139, E167, and H357 together coordinate Zn(2+).

Belongs to the peptidase M20A family. DapE subfamily. Homodimer. Zn(2+) serves as cofactor. The cofactor is Co(2+).

It carries out the reaction N-succinyl-(2S,6S)-2,6-diaminopimelate + H2O = (2S,6S)-2,6-diaminopimelate + succinate. Its pathway is amino-acid biosynthesis; L-lysine biosynthesis via DAP pathway; LL-2,6-diaminopimelate from (S)-tetrahydrodipicolinate (succinylase route): step 3/3. Catalyzes the hydrolysis of N-succinyl-L,L-diaminopimelic acid (SDAP), forming succinate and LL-2,6-diaminopimelate (DAP), an intermediate involved in the bacterial biosynthesis of lysine and meso-diaminopimelic acid, an essential component of bacterial cell walls. This is Succinyl-diaminopimelate desuccinylase from Blochmanniella floridana.